The chain runs to 311 residues: Tyrosine recombinase XerC (311 aa).

Residues Glu14–Leu100 form the Core-binding (CB) domain. In terms of domain architecture, Tyr recombinase spans Glu121 to Arg303. Active-site residues include Arg163, Lys187, His255, Arg258, and His281. Tyr290 acts as the O-(3'-phospho-DNA)-tyrosine intermediate in catalysis.

Belongs to the 'phage' integrase family. XerC subfamily. In terms of assembly, forms a cyclic heterotetrameric complex composed of two molecules of XerC and two molecules of XerD.

It localises to the cytoplasm. Site-specific tyrosine recombinase, which acts by catalyzing the cutting and rejoining of the recombining DNA molecules. The XerC-XerD complex is essential to convert dimers of the bacterial chromosome into monomers to permit their segregation at cell division. It also contributes to the segregational stability of plasmids. This chain is Tyrosine recombinase XerC, found in Leptospira interrogans serogroup Icterohaemorrhagiae serovar copenhageni (strain Fiocruz L1-130).